We begin with the raw amino-acid sequence, 110 residues long: Large ribosomal subunit protein uL22 (110 aa).

The protein belongs to the universal ribosomal protein uL22 family. As to quaternary structure, part of the 50S ribosomal subunit.

Its function is as follows. This protein binds specifically to 23S rRNA; its binding is stimulated by other ribosomal proteins, e.g. L4, L17, and L20. It is important during the early stages of 50S assembly. It makes multiple contacts with different domains of the 23S rRNA in the assembled 50S subunit and ribosome. Functionally, the globular domain of the protein is located near the polypeptide exit tunnel on the outside of the subunit, while an extended beta-hairpin is found that lines the wall of the exit tunnel in the center of the 70S ribosome. This chain is Large ribosomal subunit protein uL22, found in Chromohalobacter salexigens (strain ATCC BAA-138 / DSM 3043 / CIP 106854 / NCIMB 13768 / 1H11).